A 294-amino-acid polypeptide reads, in one-letter code: Porphobilinogen deaminase (294 aa).

S-(dipyrrolylmethanemethyl)cysteine is present on Cys232.

Belongs to the HMBS family. Monomer. Requires dipyrromethane as cofactor.

The enzyme catalyses 4 porphobilinogen + H2O = hydroxymethylbilane + 4 NH4(+). It functions in the pathway porphyrin-containing compound metabolism; protoporphyrin-IX biosynthesis; coproporphyrinogen-III from 5-aminolevulinate: step 2/4. Its function is as follows. Tetrapolymerization of the monopyrrole PBG into the hydroxymethylbilane pre-uroporphyrinogen in several discrete steps. This Corynebacterium diphtheriae (strain ATCC 700971 / NCTC 13129 / Biotype gravis) protein is Porphobilinogen deaminase.